Consider the following 467-residue polypeptide: Cysteine--tRNA ligase (467 aa).

Cys28 is a binding site for Zn(2+). Residues 30–40 (MTVYDHCHLGH) carry the 'HIGH' region motif. Cys209, His234, and Glu238 together coordinate Zn(2+). Residues 266–270 (KMSKS) carry the 'KMSKS' region motif. Lys269 is an ATP binding site.

Belongs to the class-I aminoacyl-tRNA synthetase family. In terms of assembly, monomer. Zn(2+) is required as a cofactor.

It is found in the cytoplasm. The enzyme catalyses tRNA(Cys) + L-cysteine + ATP = L-cysteinyl-tRNA(Cys) + AMP + diphosphate. This chain is Cysteine--tRNA ligase, found in Nitrosomonas eutropha (strain DSM 101675 / C91 / Nm57).